The primary structure comprises 451 residues: Serine--tRNA ligase (451 aa).

Residue 247 to 249 participates in L-serine binding; sequence TAE. Residues 278–280 and Val294 each bind ATP; that span reads RKE. Glu301 lines the L-serine pocket. An ATP-binding site is contributed by 365-368; it reads ELAS. Thr400 is a binding site for L-serine.

Belongs to the class-II aminoacyl-tRNA synthetase family. Type-1 seryl-tRNA synthetase subfamily. As to quaternary structure, homodimer. The tRNA molecule binds across the dimer.

The protein resides in the cytoplasm. It catalyses the reaction tRNA(Ser) + L-serine + ATP = L-seryl-tRNA(Ser) + AMP + diphosphate + H(+). The enzyme catalyses tRNA(Sec) + L-serine + ATP = L-seryl-tRNA(Sec) + AMP + diphosphate + H(+). It participates in aminoacyl-tRNA biosynthesis; selenocysteinyl-tRNA(Sec) biosynthesis; L-seryl-tRNA(Sec) from L-serine and tRNA(Sec): step 1/1. Catalyzes the attachment of serine to tRNA(Ser). Is also able to aminoacylate tRNA(Sec) with serine, to form the misacylated tRNA L-seryl-tRNA(Sec), which will be further converted into selenocysteinyl-tRNA(Sec). In Pyrobaculum aerophilum (strain ATCC 51768 / DSM 7523 / JCM 9630 / CIP 104966 / NBRC 100827 / IM2), this protein is Serine--tRNA ligase.